Reading from the N-terminus, the 215-residue chain is Small ribosomal subunit protein bS6 (215 aa).

Disordered stretches follow at residues 121-153 and 187-215; these read RENN…QKPK and NQRQ…KDKQ. Residues 144–153 show a composition bias toward basic and acidic residues; sequence SRTEKAQKPK. The span at 188–198 shows a compositional bias: low complexity; the sequence is QRQNQQNNNNN. Basic and acidic residues predominate over residues 199 to 215; the sequence is RFDRNRNRQHNRFKDKQ.

It belongs to the bacterial ribosomal protein bS6 family.

Functionally, binds together with bS18 to 16S ribosomal RNA. This Mycoplasma pneumoniae (strain ATCC 29342 / M129 / Subtype 1) (Mycoplasmoides pneumoniae) protein is Small ribosomal subunit protein bS6 (rpsF).